The following is a 1087-amino-acid chain: Formin-H (1087 aa).

Residues 1–23 are compositionally biased toward polar residues; it reads MSFDLESNSSGGSTIGRNSSIRL. The interval 1–25 is disordered; that stretch reads MSFDLESNSSGGSTIGRNSSIRLSS. One can recognise a GBD/FH3 domain in the interval 34-394; that stretch reads VSLNEIIDLD…QLEDELKIHP (361 aa). 2 stretches are compositionally biased toward low complexity: residues 416 to 436 and 549 to 558; these read FGFGSKSKSPSSSPALSSMAK and SPGSTLSPSP. Disordered regions lie at residues 416-445, 549-625, and 1048-1087; these read FGFGSKSKSPSSSPALSSMAKTELKKDNEE, SPGS…PAKP, and VDSLRKNLKSTSTTTPNTPPTIKIELPSQSILKPSGQLKK. Positions 433–461 form a coiled coil; it reads SMAKTELKKDNEEKQKTIEHLLKQLNKFS. The segment covering 569-588 has biased composition (polar residues); that stretch reads FGITSSSIHTSTDKLTNSTE. Residues 589-615 form the FH1 domain; sequence PILGSPPPPPPPPMSGGGGPPPPPPPP. The span at 592–616 shows a compositional bias: pro residues; that stretch reads GSPPPPPPPPMSGGGGPPPPPPPPG. The region spanning 623–1016 is the FH2 domain; sequence AKPIIKPSVK…ENSKMEDPEK (394 aa). Positions 1013–1051 constitute a DAD domain; sequence DPEKGGLQDLSSQIRSGQLFKDRRVGDSVIAQMQNVDSL.

Belongs to the formin homology family. Diaphanous subfamily. In terms of assembly, interacts with vasP, proB/profilin-2 and rac1A. Interacts (via GBD/FH3 domain) with activated Rho-GTPases.

Its subcellular location is the cytoplasm. It localises to the cell cortex. The protein localises to the cytoskeleton. In terms of biological role, formins play an important role in the nucleation of actin and the formation of linear actin filaments. Important for cell migration and formation, elongation and maintenance of filopodia. Specifically controls filopodial dynamics by regulating actin turnover at the barbed ends of actin filaments. The sequence is that of Formin-H (forH) from Dictyostelium discoideum (Social amoeba).